The following is a 416-amino-acid chain: Lipid phosphate phosphatase delta (416 aa).

The next 2 membrane-spanning stretches (helical) occupy residues 72–92 (FFSGLSCVVSVPFYTAFLPLL) and 104–124 (MTLLIAFCDYLGNCIKDVVSA). The segment at 119-127 (KDVVSAPRP) is phosphatase sequence motif I. The segment at 151-154 (PSSH) is phosphatase sequence motif II. The Proton donor role is filled by H154. A helical membrane pass occupies residues 178-198 (VSIQYYGFALACLLVALIAFG). Positions 198–209 (GRVYLGMHSVVD) are phosphatase sequence motif III. H205 serves as the catalytic Nucleophile. 5 consecutive transmembrane segments (helical) span residues 207–227 (VVDIVSGLAIGVLILGLWLTV), 241–261 (VSSFWTALSFLLLFAYPTPEH), 266–286 (YEYHTAFNGVTLGIVTGVQQT), 302–322 (ELPISSYLGRVMVGIPTILLV), and 393–413 (FFQYAGLAWSVVDLVPSLFSY).

Belongs to the type 2 lipid phosphate phosphatase family.

It localises to the endoplasmic reticulum membrane. Its function is as follows. Functions as a sphingoid long-chain base phosphate (LCBP) phosphatase. May play a role in the regulation of LCBP levels and be involved in stomatal responses through LCBP-mediated ABA signaling. The sequence is that of Lipid phosphate phosphatase delta (LPPD) from Arabidopsis thaliana (Mouse-ear cress).